Here is a 275-residue protein sequence, read N- to C-terminus: Probable endonuclease 4 (275 aa).

Zn(2+) is bound by residues histidine 66, histidine 106, glutamate 140, aspartate 172, histidine 175, histidine 209, aspartate 222, histidine 224, and glutamate 254.

It belongs to the AP endonuclease 2 family. Zn(2+) is required as a cofactor.

The enzyme catalyses Endonucleolytic cleavage to 5'-phosphooligonucleotide end-products.. Endonuclease IV plays a role in DNA repair. It cleaves phosphodiester bonds at apurinic or apyrimidinic (AP) sites, generating a 3'-hydroxyl group and a 5'-terminal sugar phosphate. This chain is Probable endonuclease 4, found in Halobacterium salinarum (strain ATCC 29341 / DSM 671 / R1).